The chain runs to 244 residues: Extracellular superoxide dismutase [Cu-Zn] (244 aa).

Residues 1–18 (MLALVCSCLLLAALPADT) form the signal peptide. 2 cysteine pairs are disulfide-bonded: Cys67-Cys212 and Cys129-Cys211. An N-linked (GlcNAc...) asparagine glycan is attached at Asn111. His118, His120, and His135 together coordinate Cu cation. Positions 135, 143, 146, and 149 each coordinate Zn(2+). A Cu cation-binding site is contributed by His185. Positions 221-244 (PWARQAQEHAERKKRRRESECKAA) are disordered. Positions 226 to 244 (AQEHAERKKRRRESECKAA) are enriched in basic and acidic residues.

It belongs to the Cu-Zn superoxide dismutase family. In terms of assembly, homotetramer. Directly interacts with ATP7A; this interaction is copper-dependent and is required for SOD3 activity. The cofactor is Cu cation. Requires Zn(2+) as cofactor.

Its subcellular location is the secreted. The protein resides in the extracellular space. The protein localises to the golgi apparatus. It localises to the trans-Golgi network. It carries out the reaction 2 superoxide + 2 H(+) = H2O2 + O2. Its function is as follows. Protect the extracellular space from toxic effect of reactive oxygen intermediates by converting superoxide radicals into hydrogen peroxide and oxygen. This chain is Extracellular superoxide dismutase [Cu-Zn] (SOD3), found in Oryctolagus cuniculus (Rabbit).